The primary structure comprises 424 residues: Enolase (424 aa).

Glutamine 165 lines the (2R)-2-phosphoglycerate pocket. Residue glutamate 207 is the Proton donor of the active site. Mg(2+) is bound by residues aspartate 244, glutamate 283, and aspartate 310. (2R)-2-phosphoglycerate-binding residues include lysine 335, arginine 364, serine 365, and lysine 386. The active-site Proton acceptor is the lysine 335.

It belongs to the enolase family. Mg(2+) serves as cofactor.

The protein localises to the cytoplasm. It is found in the secreted. It localises to the cell surface. It catalyses the reaction (2R)-2-phosphoglycerate = phosphoenolpyruvate + H2O. The protein operates within carbohydrate degradation; glycolysis; pyruvate from D-glyceraldehyde 3-phosphate: step 4/5. Its function is as follows. Catalyzes the reversible conversion of 2-phosphoglycerate (2-PG) into phosphoenolpyruvate (PEP). It is essential for the degradation of carbohydrates via glycolysis. The chain is Enolase from Chlamydia muridarum (strain MoPn / Nigg).